The primary structure comprises 156 residues: 6,7-dimethyl-8-ribityllumazine synthase (156 aa).

5-amino-6-(D-ribitylamino)uracil is bound by residues F22, 56-58 (AFE), and 80-82 (VVI). 85–86 (ST) contacts (2S)-2-hydroxy-3-oxobutyl phosphate. The active-site Proton donor is H88. 5-amino-6-(D-ribitylamino)uracil is bound at residue F113. R127 contacts (2S)-2-hydroxy-3-oxobutyl phosphate.

It belongs to the DMRL synthase family.

The enzyme catalyses (2S)-2-hydroxy-3-oxobutyl phosphate + 5-amino-6-(D-ribitylamino)uracil = 6,7-dimethyl-8-(1-D-ribityl)lumazine + phosphate + 2 H2O + H(+). It participates in cofactor biosynthesis; riboflavin biosynthesis; riboflavin from 2-hydroxy-3-oxobutyl phosphate and 5-amino-6-(D-ribitylamino)uracil: step 1/2. Functionally, catalyzes the formation of 6,7-dimethyl-8-ribityllumazine by condensation of 5-amino-6-(D-ribitylamino)uracil with 3,4-dihydroxy-2-butanone 4-phosphate. This is the penultimate step in the biosynthesis of riboflavin. The chain is 6,7-dimethyl-8-ribityllumazine synthase from Streptococcus agalactiae serotype Ia (strain ATCC 27591 / A909 / CDC SS700).